We begin with the raw amino-acid sequence, 91 residues long: Small ribosomal subunit protein uS19 (91 aa).

The protein belongs to the universal ribosomal protein uS19 family.

In terms of biological role, protein S19 forms a complex with S13 that binds strongly to the 16S ribosomal RNA. The sequence is that of Small ribosomal subunit protein uS19 from Alcanivorax borkumensis (strain ATCC 700651 / DSM 11573 / NCIMB 13689 / SK2).